The chain runs to 100 residues: MAKKSMVEREKKRARLRQKYEAKRTELKEQFRTAEDFEEKLAIHQKLQELPRNSAPSRHRNRCLTTGRPRGYYRDFGLSRNVLREWAHQGLLPGVVKSSW.

It belongs to the universal ribosomal protein uS14 family. As to quaternary structure, part of the 30S ribosomal subunit. Contacts proteins S3 and S10.

Functionally, binds 16S rRNA, required for the assembly of 30S particles and may also be responsible for determining the conformation of the 16S rRNA at the A site. The protein is Small ribosomal subunit protein uS14 of Microcystis aeruginosa (strain NIES-843 / IAM M-2473).